We begin with the raw amino-acid sequence, 311 residues long: Formimidoylglutamase (311 aa).

Mn(2+) is bound by residues His-130, Asp-155, His-157, Asp-159, Cys-242, and Asp-244.

Belongs to the arginase family. Requires Mn(2+) as cofactor.

The catalysed reaction is N-formimidoyl-L-glutamate + H2O = formamide + L-glutamate. Its pathway is amino-acid degradation; L-histidine degradation into L-glutamate; L-glutamate from N-formimidoyl-L-glutamate (hydrolase route): step 1/1. In terms of biological role, catalyzes the conversion of N-formimidoyl-L-glutamate to L-glutamate and formamide. The polypeptide is Formimidoylglutamase (Staphylococcus aureus (strain MRSA252)).